The chain runs to 746 residues: Probably inactive copalyl diphosphate synthase 3 (746 aa).

The DXDD motif; degenerated signature appears at 331 to 334; that stretch reads DVND.

It belongs to the terpene synthase family. Tpsc subfamily. In terms of tissue distribution, mostly expressed in stems, and, at low levels, in roots and leaves, but barely in flowers.

The polypeptide is Probably inactive copalyl diphosphate synthase 3 (Isodon rubescens (Rabdosia rubescens)).